A 277-amino-acid polypeptide reads, in one-letter code: Tryptophan synthase alpha chain (277 aa).

Active-site proton acceptor residues include glutamate 43 and glutamate 54.

The protein belongs to the TrpA family. In terms of assembly, tetramer of two alpha and two beta chains.

The catalysed reaction is (1S,2R)-1-C-(indol-3-yl)glycerol 3-phosphate + L-serine = D-glyceraldehyde 3-phosphate + L-tryptophan + H2O. It participates in amino-acid biosynthesis; L-tryptophan biosynthesis; L-tryptophan from chorismate: step 5/5. In terms of biological role, the alpha subunit is responsible for the aldol cleavage of indoleglycerol phosphate to indole and glyceraldehyde 3-phosphate. In Haloferax volcanii (strain ATCC 29605 / DSM 3757 / JCM 8879 / NBRC 14742 / NCIMB 2012 / VKM B-1768 / DS2) (Halobacterium volcanii), this protein is Tryptophan synthase alpha chain.